A 433-amino-acid chain; its full sequence is Protoheme IX farnesyltransferase 2 (433 aa).

Residues 1–164 (MQRFTGLVTA…LTKPRLMWLL (164 aa)) are unknown. The next 13 membrane-spanning stretches (helical) occupy residues 4-24 (FTGL…LGVA), 35-55 (AVAH…AAAL), 67-87 (WGVT…MAVL), 95-115 (LHLF…TWHL), 160-180 (LMWL…VTGA), 184-204 (GVTI…AGTF), 236-256 (AFGV…VNPL), 257-277 (AAAL…VVLK), 282-304 (WNTV…AVAG), 308-330 (LPAL…NLAI), 357-377 (ILYW…VAGF), 378-398 (GPVY…TVVV), and 413-433 (HASN…TMVI). The segment at 165–430 (CLLALSGMAL…ALLVAILVET (266 aa)) is protoheme IX prenyltransferase.

It in the C-terminal section; belongs to the UbiA prenyltransferase family. Protoheme IX farnesyltransferase subfamily.

The protein localises to the cell membrane. It catalyses the reaction heme b + (2E,6E)-farnesyl diphosphate + H2O = Fe(II)-heme o + diphosphate. It participates in porphyrin-containing compound metabolism; heme O biosynthesis; heme O from protoheme: step 1/1. Converts heme B (protoheme IX) to heme O by substitution of the vinyl group on carbon 2 of heme B porphyrin ring with a hydroxyethyl farnesyl side group. The sequence is that of Protoheme IX farnesyltransferase 2 (ctaB2) from Natronomonas pharaonis (strain ATCC 35678 / DSM 2160 / CIP 103997 / JCM 8858 / NBRC 14720 / NCIMB 2260 / Gabara) (Halobacterium pharaonis).